A 2517-amino-acid chain; its full sequence is Serine/threonine-protein kinase ATR (2517 aa).

Residues 1178–1214 (EPMLEQIVNVLMAGCQHDDSQLQMASAKCLGELGAID) form an HEAT repeat. The region spanning 1509–2066 (LVSRASYNCG…LWMLLPHFKS (558 aa)) is the FAT domain. A Phosphoserine modification is found at Ser1569. Position 1570 is a phosphotyrosine (Tyr1570). Ser1573 is subject to Phosphoserine. Phosphothreonine is present on Thr1575. Residues 2184 to 2508 (FQESVLILRS…EATKVDNLAS (325 aa)) enclose the PI3K/PI4K catalytic domain. The tract at residues 2190–2196 (ILRSAAK) is G-loop. The interval 2360–2368 (GLGDRHGEN) is catalytic loop. Positions 2380-2404 (HVDFNCLFNQGELLPYPEVVPFRLT) are activation loop. The FATC domain occupies 2485–2517 (IPLSTEGQVNFLINEATKVDNLASMYIGWGAFL).

Belongs to the PI3/PI4-kinase family. ATM subfamily. Interacts with mus304. Requires Mn(2+) as cofactor.

It localises to the nucleus. It carries out the reaction L-seryl-[protein] + ATP = O-phospho-L-seryl-[protein] + ADP + H(+). It catalyses the reaction L-threonyl-[protein] + ATP = O-phospho-L-threonyl-[protein] + ADP + H(+). Functionally, serine/threonine protein kinase which activates checkpoint signaling upon genotoxic stresses such as ionizing radiation (IR), ultraviolet light (UV), or DNA replication stalling, thereby acting as a DNA damage sensor. Recognizes the substrate consensus sequence [ST]-Q. Phosphorylates various proteins, which collectively inhibits DNA replication and mitosis and promotes DNA repair and recombination. Phosphorylates grp/CHK1. Phosphorylates 'Ser-137' of histone variant H2AX/H2AV at sites of DNA damage, thereby regulating DNA damage response mechanism. Essential for the DNA damage checkpoint in larval imaginal disks and neuroblasts and for the DNA replication checkpoint in the embryo. Also has an essential role during early nuclear divisions in embryos, where it is required to delay mitosis in response to incomplete DNA replication. Also plays an important role during meiosis, where it may monitor double-strand-break repair during meiotic crossing over, to regulate the progression of prophase I, and to enforce metaphase I delay observed at the end of oogenesis. Involved in telomere maintenance and prevention of telomere fusion; potentially functioning downstream of moi/modigliani. The chain is Serine/threonine-protein kinase ATR (mei-41) from Drosophila melanogaster (Fruit fly).